We begin with the raw amino-acid sequence, 489 residues long: Fumarate reductase (CoM/CoB) subunit B (489 aa).

The 88-residue stretch at 2 to 89 (INVKVLRFEP…GAVIEPVDLP (88 aa)) folds into the 2Fe-2S ferredoxin-type domain. Positions 53, 58, 61, and 73 each coordinate [2Fe-2S] cluster. 4Fe-4S ferredoxin-type domains are found at residues 124-158 (PEDY…YAGP) and 178-209 (AAGG…PGDA). Residues Cys136, Cys139, Cys142, Cys146, Cys189, Cys192, Cys195, and Cys199 each contribute to the [4Fe-4S] cluster site.

As to quaternary structure, subunit B of the heterodimeric fumarate reductase of methanogenic Archaea, composed of subunits A (TfrA) and B (TfrB). [2Fe-2S] cluster serves as cofactor. [4Fe-4S] cluster is required as a cofactor.

It localises to the cytoplasm. The enzyme catalyses coenzyme B + coenzyme M + fumarate = coenzyme M-coenzyme B heterodisulfide + succinate. Its function is as follows. Catalyzes the reduction of fumarate with reduced coenzyme M (CoM-S-H) and coenzyme B (CoB-S-H). In vitro, is able to reduces fumarate with reduced benzyl viologen, oxidize CoM-S-H and CoB-S-H to CoM-S-S-CoB with methylene blue, and reduce CoM-S-S-CoB with reduced benzyl viologen. The enzyme has specificity for the two thiol compounds as the CoB--CoM heterodisulfide reductase. The enzyme is very sensitive to oxygen. In Methanothermobacter marburgensis (strain ATCC BAA-927 / DSM 2133 / JCM 14651 / NBRC 100331 / OCM 82 / Marburg) (Methanobacterium thermoautotrophicum), this protein is Fumarate reductase (CoM/CoB) subunit B.